A 398-amino-acid chain; its full sequence is Dual specificity protein phosphatase 4 (398 aa).

V2 is modified (N-acetylvaline). One can recognise a Rhodanese domain in the interval S45–S163. A Tyrosine-protein phosphatase domain is found at G199–T340. The active-site Phosphocysteine intermediate is C284. 2 positions are modified to phosphoserine; by MAPK: S390 and S395.

It belongs to the protein-tyrosine phosphatase family. Non-receptor class dual specificity subfamily. Hollow spherical complex composed of 24 subunits with pseudooctahedral symmetry, has a tetramer as the basic unit. In terms of processing, phosphorylation in the C-terminus by ERK1/2 inhibits proteasomal degradation and stabilizes the protein.

It localises to the nucleus. It catalyses the reaction O-phospho-L-tyrosyl-[protein] + H2O = L-tyrosyl-[protein] + phosphate. The enzyme catalyses O-phospho-L-seryl-[protein] + H2O = L-seryl-[protein] + phosphate. It carries out the reaction O-phospho-L-threonyl-[protein] + H2O = L-threonyl-[protein] + phosphate. Functionally, regulates mitogenic signal transduction by dephosphorylating both Thr and Tyr residues on MAP kinases ERK1 and ERK2. This Mus musculus (Mouse) protein is Dual specificity protein phosphatase 4 (Dusp4).